The sequence spans 654 residues: Pyoverdine export ATP-binding/permease protein PvdT (654 aa).

The ABC transporter domain occupies 6–245 (IELCDIRKAY…QPEQLQANDL (240 aa)). 43–50 (GASGSGKS) is a binding site for ATP. 4 helical membrane-spanning segments follow: residues 282 to 302 (ALTL…LAVG), 529 to 549 (LSLM…IGVM), 596 to 616 (IVIA…VAFA), and 617 to 637 (LPAI…FGFM).

Belongs to the ABC transporter superfamily. Macrolide exporter (TC 3.A.1.122) family. In terms of assembly, part of the tripartite efflux system PvdRT-OpmQ, which is composed of an inner membrane component with both ATPase and permease domains, PvdT, a periplasmic membrane fusion protein, PvdR, and an outer membrane component, OpmQ.

It localises to the cell inner membrane. Part of the tripartite efflux system PvdRT-OpmQ required for the secretion into the extracellular milieu of the siderophore pyoverdine (PVD), which is involved in iron acquisition. This subunit binds PVD and drives its secretion by hydrolyzing ATP. The system is responsible for export of newly synthesized PVD after the final steps of biosynthesis have taken place in the periplasm. It is also responsible for recycling of PVD after internalization of ferri-PVD into the periplasm by the outer-membrane receptor FpvA and release of iron from PVD, thus making PVD available for new cycles of iron uptake. The protein is Pyoverdine export ATP-binding/permease protein PvdT of Pseudomonas entomophila (strain L48).